The following is a 340-amino-acid chain: tRNA-cytidine(32) 2-sulfurtransferase (340 aa).

The short motif at 74–79 is the PP-loop motif element; it reads SGGKDS. [4Fe-4S] cluster-binding residues include Cys-149, Cys-152, and Cys-240.

Belongs to the TtcA family. In terms of assembly, homodimer. Mg(2+) is required as a cofactor. [4Fe-4S] cluster serves as cofactor.

It localises to the cytoplasm. It catalyses the reaction cytidine(32) in tRNA + S-sulfanyl-L-cysteinyl-[cysteine desulfurase] + AH2 + ATP = 2-thiocytidine(32) in tRNA + L-cysteinyl-[cysteine desulfurase] + A + AMP + diphosphate + H(+). It participates in tRNA modification. In terms of biological role, catalyzes the ATP-dependent 2-thiolation of cytidine in position 32 of tRNA, to form 2-thiocytidine (s(2)C32). The sulfur atoms are provided by the cysteine/cysteine desulfurase (IscS) system. In Burkholderia ambifaria (strain MC40-6), this protein is tRNA-cytidine(32) 2-sulfurtransferase.